Reading from the N-terminus, the 178-residue chain is uncharacterized protein (178 aa).

5 consecutive transmembrane segments (helical) span residues 1–21 (MISIYLFMAFFIANLLGYGGG), 47–67 (MLALANALPGPIATKIAAYVG), 75–95 (GFLIALIATVVPSALALIVLL), 117–137 (VIAVMMLILTWQIGADGIKAI), and 158–178 (MHPAFLIIAAFLYGGLVIPYL).

It belongs to the chromate ion transporter (CHR) (TC 2.A.51) family.

Its subcellular location is the cell membrane. This is an uncharacterized protein from Bacillus subtilis (strain 168).